Consider the following 412-residue polypeptide: Phosphatidylinositol 3,4,5-trisphosphate 3-phosphatase and protein-tyrosine-phosphatase PTEN1 (412 aa).

Positions 42–211 (RRLIIGGYDL…KYWSDLLSFS (170 aa)) constitute a Phosphatase tensin-type domain. The active-site Phosphocysteine intermediate is the Cys-152. Positions 239–396 (VDSVFFVVSE…FSLELLFGPA (158 aa)) constitute a C2 tensin-type domain.

This sequence belongs to the PTEN phosphatase protein family. As to expression, expressed exclusively in pollen grains during the late stage of development (at protein level).

The enzyme catalyses O-phospho-L-tyrosyl-[protein] + H2O = L-tyrosyl-[protein] + phosphate. It carries out the reaction a 1,2-diacyl-sn-glycero-3-phospho-(1D-myo-inositol-3,4,5-trisphosphate) + H2O = a 1,2-diacyl-sn-glycero-3-phospho-(1D-myo-inositol-4,5-bisphosphate) + phosphate. Inhibited by vanadate. Its function is as follows. Protein tyrosine phosphatase that also exhibits lipid phosphatase activity. Can use phosphatidylinositol substrates such as PtdIns(3,4,5)P(3) as substrate. Pollen-specific phosphatase required for pollen development. The chain is Phosphatidylinositol 3,4,5-trisphosphate 3-phosphatase and protein-tyrosine-phosphatase PTEN1 from Arabidopsis thaliana (Mouse-ear cress).